The primary structure comprises 138 residues: Beta-galactosidase (138 aa).

Belongs to the glycosyl hydrolase 2 family.

It catalyses the reaction Hydrolysis of terminal non-reducing beta-D-galactose residues in beta-D-galactosides.. This is Beta-galactosidase (lacZ) from Rhizobium radiobacter (Agrobacterium tumefaciens).